We begin with the raw amino-acid sequence, 208 residues long: Large ribosomal subunit protein bL25 (208 aa).

The interval 1-20 (MANHQIKAQRRKDEGKGASR) is disordered.

This sequence belongs to the bacterial ribosomal protein bL25 family. CTC subfamily. As to quaternary structure, part of the 50S ribosomal subunit; part of the 5S rRNA/L5/L18/L25 subcomplex. Contacts the 5S rRNA. Binds to the 5S rRNA independently of L5 and L18.

This is one of the proteins that binds to the 5S RNA in the ribosome where it forms part of the central protuberance. The sequence is that of Large ribosomal subunit protein bL25 from Xylella fastidiosa (strain 9a5c).